Here is a 511-residue protein sequence, read N- to C-terminus: Pancreatic alpha-amylase (511 aa).

An N-terminal signal peptide occupies residues 1–15 (MKLFLLLSAFGFCWA). Q16 carries the pyrrolidone carboxylic acid modification. 3 disulfide bridges follow: C43–C101, C85–C130, and C156–C175. Ca(2+)-binding residues include N115, R173, and D182. R210 contacts chloride. D212 (nucleophile) is an active-site residue. H216 contributes to the Ca(2+) binding site. E248 functions as the Proton donor in the catalytic mechanism. Residues N313 and R352 each coordinate chloride. Cysteines 393 and 399 form a disulfide. N-linked (GlcNAc...) asparagine glycosylation is present at N427. C465 and C477 are joined by a disulfide.

It belongs to the glycosyl hydrolase 13 family. In terms of assembly, binds to the sea anemone inhibitor helianthamide and magnificamide. It depends on Ca(2+) as a cofactor. Chloride serves as cofactor.

The protein localises to the secreted. It localises to the extracellular space. The catalysed reaction is Endohydrolysis of (1-&gt;4)-alpha-D-glucosidic linkages in polysaccharides containing three or more (1-&gt;4)-alpha-linked D-glucose units.. This Sus scrofa (Pig) protein is Pancreatic alpha-amylase (AMY2).